Here is a 151-residue protein sequence, read N- to C-terminus: Large ribosomal subunit protein uL13 (151 aa).

Belongs to the universal ribosomal protein uL13 family. As to quaternary structure, part of the 50S ribosomal subunit.

This protein is one of the early assembly proteins of the 50S ribosomal subunit, although it is not seen to bind rRNA by itself. It is important during the early stages of 50S assembly. This is Large ribosomal subunit protein uL13 from Microchaete diplosiphon (Fremyella diplosiphon).